The chain runs to 284 residues: 2-dehydro-3-deoxyphosphooctonate aldolase (284 aa).

The protein belongs to the KdsA family.

It localises to the cytoplasm. The catalysed reaction is D-arabinose 5-phosphate + phosphoenolpyruvate + H2O = 3-deoxy-alpha-D-manno-2-octulosonate-8-phosphate + phosphate. Its pathway is carbohydrate biosynthesis; 3-deoxy-D-manno-octulosonate biosynthesis; 3-deoxy-D-manno-octulosonate from D-ribulose 5-phosphate: step 2/3. The protein operates within bacterial outer membrane biogenesis; lipopolysaccharide biosynthesis. The sequence is that of 2-dehydro-3-deoxyphosphooctonate aldolase from Burkholderia multivorans (strain ATCC 17616 / 249).